The sequence spans 155 residues: Interleukin-2 (155 aa).

Residues 1-20 (MYSMQLASCVALTLVLLVNS) form the signal peptide. The O-linked (GalNAc...) threonine glycan is linked to T23. The cysteines at positions 78 and 126 are disulfide-linked.

Belongs to the IL-2 family.

It is found in the secreted. Functionally, cytokine produced by activated CD4-positive helper T-cells and to a lesser extend activated CD8-positive T-cells and natural killer (NK) cells that plays pivotal roles in the immune response and tolerance. Binds to a receptor complex composed of either the high-affinity trimeric IL-2R (IL2RA/CD25, IL2RB/CD122 and IL2RG/CD132) or the low-affinity dimeric IL-2R (IL2RB and IL2RG). Interaction with the receptor leads to oligomerization and conformation changes in the IL-2R subunits resulting in downstream signaling starting with phosphorylation of JAK1 and JAK3. In turn, JAK1 and JAK3 phosphorylate the receptor to form a docking site leading to the phosphorylation of several substrates including STAT5. This process leads to activation of several pathways including STAT, phosphoinositide-3-kinase/PI3K and mitogen-activated protein kinase/MAPK pathways. Functions as a T-cell growth factor and can increase NK-cell cytolytic activity as well. Promotes strong proliferation of activated B-cells and subsequently immunoglobulin production. Plays a pivotal role in regulating the adaptive immune system by controlling the survival and proliferation of regulatory T-cells, which are required for the maintenance of immune tolerance. Moreover, participates in the differentiation and homeostasis of effector T-cell subsets, including Th1, Th2, Th17 as well as memory CD8-positive T-cells. This chain is Interleukin-2 (Il2), found in Rattus norvegicus (Rat).